Consider the following 882-residue polypeptide: Putative HTH-type transcriptional regulator Rv0890c (882 aa).

Residues 814–879 enclose the HTH luxR-type domain; the sequence is PARGWGSLTP…QLVDEAARRG (66 aa). A DNA-binding region (H-T-H motif) is located at residues 838–857; sequence NKDIAKRLFVSPRTVQTHLT.

The protein is Putative HTH-type transcriptional regulator Rv0890c of Mycobacterium tuberculosis (strain ATCC 25618 / H37Rv).